The sequence spans 428 residues: Histone deacetylase 3 (428 aa).

The segment at Asn-3 to Glu-316 is histone deacetylase. 1D-myo-inositol 1,4,5,6-tetrakisphosphate contacts are provided by His-17, Gly-21, and Lys-25. His-135 is an active-site residue. Residues Asp-170, His-172, and Asp-259 each coordinate Zn(2+). Arg-265 is a binding site for 1D-myo-inositol 1,4,5,6-tetrakisphosphate. The interval Pro-381–Ile-428 is disordered. Composition is skewed to basic and acidic residues over residues Ser-386–Ser-405 and Asp-415–Ile-428.

Belongs to the histone deacetylase family. HD type 1 subfamily.

The protein localises to the nucleus. Its subcellular location is the chromosome. It localises to the cytoplasm. The protein resides in the cytosol. The catalysed reaction is N(6)-acetyl-L-lysyl-[histone] + H2O = L-lysyl-[histone] + acetate. It carries out the reaction N(6)-acetyl-L-lysyl-[protein] + H2O = L-lysyl-[protein] + acetate. It catalyses the reaction N(6)-(2E)-butenoyl-L-lysyl-[protein] + H2O = (2E)-2-butenoate + L-lysyl-[protein]. The enzyme catalyses N(6)-(2-hydroxyisobutanoyl)-L-lysyl-[protein] + H2O = 2-hydroxy-2-methylpropanoate + L-lysyl-[protein]. The catalysed reaction is N(6)-[(S)-lactoyl]-L-lysyl-[protein] + H2O = (S)-lactate + L-lysyl-[protein]. Inositol tetraphosphate (1D-myo-inositol 1,4,5,6-tetrakisphosphate) promotes the histone deacetylase activity by acting as an intermolecular glue between hdac3 and N-Cor repressor complex components. Functionally, histone deacetylase that catalyzes the deacetylation of lysine residues on the N-terminal part of the core histones (H2A, H2B, H3 and H4), and some other non-histone substrates. Histone deacetylation gives a tag for epigenetic repression and plays an important role in transcriptional regulation, cell cycle progression and developmental events. Histone deacetylases act via the formation of large multiprotein complexes, such as N-Cor repressor complex, which activate the histone deacetylase activity. Participates in the BCL6 transcriptional repressor activity by deacetylating the H3 'Lys-27' (H3K27) on enhancer elements, antagonizing EP300 acetyltransferase activity and repressing proximal gene expression. Also functions as a deacetylase for non-histone targets. In addition to protein deacetylase activity, also acts as a protein-lysine deacylase by recognizing other acyl groups: catalyzes removal of (2E)-butenoyl (crotonyl), lactoyl (lactyl) and 2-hydroxyisobutanoyl (2-hydroxyisobutyryl) acyl groups from lysine residues, leading to protein decrotonylation, delactylation and de-2-hydroxyisobutyrylation, respectively. The sequence is that of Histone deacetylase 3 (hdac3) from Danio rerio (Zebrafish).